The chain runs to 897 residues: uncharacterized protein (897 aa).

Disordered regions lie at residues 25–89 (RLQD…TRKR) and 106–168 (PTRL…TPPS). Low complexity-rich tracts occupy residues 32–44 (SSSP…SSSS), 57–68 (SLQNSQSSSYSL), and 106–142 (PTRL…SSVS). The region spanning 263–446 (SMEQSSKCGG…YSLLKFLRIK (184 aa)) is the Helicase ATP-binding domain. Residue 276–283 (DDMGLGKT) participates in ATP binding. Positions 397-400 (DEAH) match the DEAH box motif. The RING-type zinc-finger motif lies at 606 to 655 (CSVCLDPCLAPVFIIPCGHFTCQECMSMLVGQKYGSSSTSTIIAKCPMCR). The region spanning 727-890 (QARQTILDII…LSRLDKEELL (164 aa)) is the Helicase C-terminal domain.

Belongs to the SNF2/RAD54 helicase family.

Its subcellular location is the cytoplasm. The protein localises to the nucleus. This is an uncharacterized protein from Schizosaccharomyces pombe (strain 972 / ATCC 24843) (Fission yeast).